A 411-amino-acid polypeptide reads, in one-letter code: Putative ion-transport protein YfeO (411 aa).

The next 11 membrane-spanning stretches (helical) occupy residues 9–29, 54–74, 99–119, 149–169, 186–206, 223–243, 258–278, 296–316, 322–342, 343–363, and 386–406; these read MLLL…VLIA, DSPF…GLII, ALPG…SLGP, ILAS…AALI, LFAP…FFHP, IASG…AVWC, VLIL…GGPL, LGAG…VIAA, GGRI…LHAH, VEAV…VLVV, and LLCI…LLAA.

Belongs to the chloride channel (TC 2.A.49) family.

The protein localises to the cell membrane. This is Putative ion-transport protein YfeO from Salmonella schwarzengrund (strain CVM19633).